Here is a 495-residue protein sequence, read N- to C-terminus: Solute carrier family 2, facilitated glucose transporter member 3 (495 aa).

At 1 to 10 (MGTQKVTVSL) the chain is on the cytoplasmic side. Residues 11–32 (IFALSIATIGSFQFGYNTGVIN) form a helical membrane-spanning segment. Residues 33–64 (APETIIKDFLNYTLEEKSENLPTEVLLTSLWS) are Extracellular-facing. Asparagine 43 carries an N-linked (GlcNAc...) asparagine glycan. Residues 65-85 (LSVAIFSVGGMIGSFSVGLFV) traverse the membrane as a helical segment. Residues 86-90 (NRFGR) are Cytoplasmic-facing. The chain crosses the membrane as a helical span at residues 91–111 (RNSMLMVNLLAVAGGCLMGFC). Over 112–118 (KIAQSVE) the chain is Extracellular. The chain crosses the membrane as a helical span at residues 119 to 142 (MLILGRLIIGLFCGLCTGFVPMYI). The Cytoplasmic segment spans residues 143 to 153 (GEISPTALRGA). A helical transmembrane segment spans residues 154 to 174 (FGTLNQLGIVIGILVAQIFGL). Glutamine 159 provides a ligand contact to D-glucose. At 175 to 183 (KVIMGTEEL) the chain is on the extracellular side. A helical membrane pass occupies residues 184 to 204 (WPLLLGFTIIPAVLQSAALPF). At 205-269 (CPESPRFLLI…LFRSRSYRQP (65 aa)) the chain is on the cytoplasmic side. Threonine 232 is modified (phosphothreonine). Residues 270 to 290 (IIISIMLQLSQQLSGINAVFY) traverse the membrane as a helical segment. Positions 277–279 (QLS) are important for selectivity against fructose. Residues 280–281 (QQ) and asparagine 286 contribute to the D-glucose site. The Extracellular portion of the chain corresponds to 291-304 (YSTGIFKDAGVEEP). The helical transmembrane segment at 305–325 (IYATIGAGVVNTIFTVVSLFL) threads the bilayer. Position 315 (asparagine 315) interacts with D-glucose. Over 326–331 (VERAGR) the chain is Cytoplasmic. Residues 332-352 (RTLHMIGLGGMAVCSILMTIS) form a helical membrane-spanning segment. The Extracellular portion of the chain corresponds to 353-363 (LLLKDNYNWMS). The chain crosses the membrane as a helical span at residues 364 to 389 (FVCIGAILVFVAFFEIGPGPIPWFIV). Residues glutamate 378 and tryptophan 386 each contribute to the D-glucose site. Topologically, residues 390–399 (AELFSQGPRP) are cytoplasmic. Residues 400-420 (AAMAVAGCSNWTSNFLVGLLF) traverse the membrane as a helical segment. Residues 421-429 (PSAAFYLGA) are Extracellular-facing. A helical membrane pass occupies residues 430-450 (YVFIIFTGFLIVFLVFTFFKV). The Cytoplasmic segment spans residues 451–495 (PETRGRTFEEITRAFEGQGQDANRAEKGPIVEMNSMQPVKETATV). Serine 485 is modified (phosphoserine). Threonine 492 carries the phosphothreonine modification.

It belongs to the major facilitator superfamily. Sugar transporter (TC 2.A.1.1) family. Glucose transporter subfamily. In terms of assembly, interacts with SMIM43; the interaction may promote SLC2A3-mediated glucose transport to meet the energy needs of mesendoderm differentiation.

It localises to the cell membrane. It is found in the perikaryon. The protein resides in the cell projection. The catalysed reaction is D-glucose(out) = D-glucose(in). The enzyme catalyses D-galactose(in) = D-galactose(out). Deoxyglucose transport is inhibited by D-glucose, D-galactose and maltose. Galactose transport is inhibited by D-glucose and maltose. Functionally, facilitative glucose transporter. Can also mediate the uptake of various other monosaccharides across the cell membrane. Mediates the uptake of glucose, 2-deoxyglucose, galactose, mannose, xylose and fucose, and probably also dehydroascorbate. Does not mediate fructose transport. Required for mesendoderm differentiation. The protein is Solute carrier family 2, facilitated glucose transporter member 3 of Canis lupus familiaris (Dog).